The primary structure comprises 270 residues: MRLTVVGANGRMGRELITAIRQRKDVELCAVLVRKNSPFVGKDASVLIGSDSLGIRITDDPENAFSSTEGIVDFSHPQASLLYADYAAQKKLVHIIGTTGFSKTEEEKIAEFAKYTTIVKSGNMSLGINLLANLVKKAAKALEADDFDIEIYEMHHANKVDAPSGTALLLGQAAAEGRNVMLQDVRINERNGYTGKREKGSIGFSCSRGGTVIGEHSVIFAGSHERIVLSHTAQERSIFANGALKAASWAKNHANGLYSMLDVLGLNDQF.

7–12 lines the NAD(+) pocket; it reads GANGRM. An NADP(+)-binding site is contributed by Arg34. NAD(+)-binding positions include 97–99 and 121–124; these read GTT and SGNM. Catalysis depends on His155, which acts as the Proton donor/acceptor. Position 156 (His156) interacts with (S)-2,3,4,5-tetrahydrodipicolinate. Catalysis depends on Lys159, which acts as the Proton donor. Position 165–166 (165–166) interacts with (S)-2,3,4,5-tetrahydrodipicolinate; the sequence is GT.

Belongs to the DapB family.

It is found in the cytoplasm. It carries out the reaction (S)-2,3,4,5-tetrahydrodipicolinate + NAD(+) + H2O = (2S,4S)-4-hydroxy-2,3,4,5-tetrahydrodipicolinate + NADH + H(+). It catalyses the reaction (S)-2,3,4,5-tetrahydrodipicolinate + NADP(+) + H2O = (2S,4S)-4-hydroxy-2,3,4,5-tetrahydrodipicolinate + NADPH + H(+). The protein operates within amino-acid biosynthesis; L-lysine biosynthesis via DAP pathway; (S)-tetrahydrodipicolinate from L-aspartate: step 4/4. Functionally, catalyzes the conversion of 4-hydroxy-tetrahydrodipicolinate (HTPA) to tetrahydrodipicolinate. This chain is 4-hydroxy-tetrahydrodipicolinate reductase, found in Bartonella tribocorum (strain CIP 105476 / IBS 506).